The sequence spans 468 residues: ATP synthase subunit beta (468 aa).

155 to 162 (GGAGVGKT) contributes to the ATP binding site.

Belongs to the ATPase alpha/beta chains family. F-type ATPases have 2 components, CF(1) - the catalytic core - and CF(0) - the membrane proton channel. CF(1) has five subunits: alpha(3), beta(3), gamma(1), delta(1), epsilon(1). CF(0) has three main subunits: a(1), b(2) and c(9-12). The alpha and beta chains form an alternating ring which encloses part of the gamma chain. CF(1) is attached to CF(0) by a central stalk formed by the gamma and epsilon chains, while a peripheral stalk is formed by the delta and b chains.

The protein localises to the cell membrane. It carries out the reaction ATP + H2O + 4 H(+)(in) = ADP + phosphate + 5 H(+)(out). Produces ATP from ADP in the presence of a proton gradient across the membrane. The catalytic sites are hosted primarily by the beta subunits. This Streptococcus gordonii (strain Challis / ATCC 35105 / BCRC 15272 / CH1 / DL1 / V288) protein is ATP synthase subunit beta.